Consider the following 2588-residue polypeptide: uncharacterized protein (2588 aa).

Residues 1-11 (MSFKNNEKYMD) are compositionally biased toward basic and acidic residues. Disordered regions lie at residues 1-56 (MSFK…NISN), 442-598 (ELES…HFSN), 774-801 (KKEKKKTKTDMDNNNNNNNNNNNDNNNI), 1303-1357 (DSHD…KKKY), 1631-1662 (QNSNNKSNDSLKMSYSKKKKQHTNEHMNHHQN), 1685-1705 (NNNNNNNNNNNNNDDNTKDQP), 1820-1856 (KLNVQTNDQGERQDERNIDHEDEPVSSNTEDDHEEND), 2317-2342 (KKKKELDDVEKEGQPKMGVGNDDNIN), and 2415-2437 (YDNNNNNDNNNDNNNDNNNNSHT). Residues 42 to 56 (NNNNNNNNNNSNISN) are compositionally biased toward low complexity. Positions 413 to 452 (YREIEENEKVMEMQRRENELLEEKKRLKQELESYHDDSST) form a coiled coil. Positions 451–462 (STDDDSSADEQQ) are enriched in acidic residues. Basic and acidic residues-rich tracts occupy residues 463–515 (DERR…KNDD) and 522–588 (DHTH…DHTH). Low complexity predominate over residues 785–801 (DNNNNNNNNNNNDNNNI). Over residues 1308–1318 (NNDDSVNDSND) the composition is skewed to acidic residues. A compositionally biased stretch (low complexity) spans 1319–1331 (DTNNVNVNVNVND). Residues 1347-1356 (DKKKKHKKKK) show a composition bias toward basic residues. Residues 1631–1643 (QNSNNKSNDSLKM) show a composition bias toward polar residues. The segment covering 1685 to 1698 (NNNNNNNNNNNNND) has biased composition (low complexity). The segment covering 1828 to 1838 (QGERQDERNID) has biased composition (basic and acidic residues). Over residues 1839–1856 (HEDEPVSSNTEDDHEEND) the composition is skewed to acidic residues. Residues 2416–2434 (DNNNNNDNNNDNNNDNNNN) show a composition bias toward low complexity.

This is an uncharacterized protein from Plasmodium falciparum (isolate 3D7).